We begin with the raw amino-acid sequence, 76 residues long: Small ribosomal subunit protein bS18 (76 aa).

Belongs to the bacterial ribosomal protein bS18 family. Part of the 30S ribosomal subunit. Forms a tight heterodimer with protein bS6.

Binds as a heterodimer with protein bS6 to the central domain of the 16S rRNA, where it helps stabilize the platform of the 30S subunit. The chain is Small ribosomal subunit protein bS18 from Xylella fastidiosa (strain M23).